Consider the following 98-residue polypeptide: Large ribosomal subunit protein uL23 (98 aa).

Belongs to the universal ribosomal protein uL23 family. Part of the 50S ribosomal subunit. Contacts protein L29, and trigger factor when it is bound to the ribosome.

In terms of biological role, one of the early assembly proteins it binds 23S rRNA. One of the proteins that surrounds the polypeptide exit tunnel on the outside of the ribosome. Forms the main docking site for trigger factor binding to the ribosome. The chain is Large ribosomal subunit protein uL23 from Rickettsia rickettsii (strain Iowa).